Reading from the N-terminus, the 1639-residue chain is Protein GFS12 (1639 aa).

The Protein kinase 1 domain occupies 206–294 (LEEKSKLRCL…IRPSNILLSD (89 aa)). Residues 336–608 (LKISSHLDWQ…FHGFGVDNKR (273 aa)) enclose the BEACH domain. In terms of domain architecture, Protein kinase 2 spans 715 to 788 (IAGDIFSIGC…AKSLLDSPYF (74 aa)). WD repeat units follow at residues 1290 to 1333 (AHHG…CVSS) and 1336 to 1373 (AHEE…LISL). Positions 1377–1398 (SPSDQDQASSDPSSKNNSNPCN) are enriched in low complexity. Residues 1377-1399 (SPSDQDQASSDPSSKNNSNPCNR) are disordered. WD repeat units lie at residues 1465–1499 (ALCS…RLFD), 1511–1549 (AHDG…TPQP), and 1609–1639 (RVKS…RICC).

This sequence belongs to the protein kinase superfamily. Tyr protein kinase family. In terms of assembly, interacts (via protein kinase 2 domain) with BCHC1 (via PH-BEACH domain). In terms of tissue distribution, weakly expressed in the cotyledons of germinating seedlings. Restricted to the vascular tissues of cotyledons. Detected in root tips, apical meristem, young flower buds and receptacles.

May act predominantly to suppress BCHC1, which itself is a negative factor in protein storage vacuole (PSV) trafficking regulation and plant effector triggered immunity (ETI). Required for ETI, but not for cell death. This Arabidopsis thaliana (Mouse-ear cress) protein is Protein GFS12.